Here is a 36-residue protein sequence, read N- to C-terminus: Tddefensin (36 aa).

Disulfide bonds link cysteine 3–cysteine 24, cysteine 10–cysteine 32, and cysteine 14–cysteine 34.

The protein belongs to the invertebrate defensin family. As to expression, expressed by the venom gland.

It localises to the secreted. Its function is as follows. Antibacterial peptide mostly active against Gram-positive bacteria. In Tityus discrepans (Venezuelan scorpion), this protein is Tddefensin.